The primary structure comprises 406 residues: Putative sodium-coupled neutral amino acid transporter 11 (406 aa).

The Cytoplasmic segment spans residues 1–7 (MKQAGFP). Residues 8–28 (LGILLLFWVSYVTDFSLVLLI) traverse the membrane as a helical segment. N-linked (GlcNAc...) asparagine glycosylation is present at asparagine 44. The next 6 helical transmembrane spans lie at 48-68 (GFPGYLLLSVLQFLYPFIAMI), 93-113 (VFIGRHFIIGLSTVTFTLPLS), 121-141 (LGKVSLISTGLTTLILGIVMA), 156-176 (AWVFAKPNAIQAVGVMSFAFI), 202-222 (MSIVISVFICIFFATCGYLTF), and 241-263 (VTFGRFCYGVTVILTYPMECFVT). Asparagine 275 carries an N-linked (GlcNAc...) asparagine glycan. Transmembrane regions (helical) follow at residues 279–299 (VFHIVVTVMVITVATLVSLLI), 301–321 (CLGIVLELNGVLCATPLIFII), and 340–360 (IMSCVMLPIGAVVMVFGFVMA).

Belongs to the amino acid/polyamine transporter 2 family.

It is found in the membrane. Its function is as follows. Putative sodium-dependent amino acid/proton antiporter. This Homo sapiens (Human) protein is Putative sodium-coupled neutral amino acid transporter 11 (SLC38A11).